Consider the following 316-residue polypeptide: Homoserine kinase (316 aa).

Position 97–107 (97–107) interacts with ATP; that stretch reads PHSRGLGSSAA.

It belongs to the GHMP kinase family. Homoserine kinase subfamily.

Its subcellular location is the cytoplasm. The catalysed reaction is L-homoserine + ATP = O-phospho-L-homoserine + ADP + H(+). It participates in amino-acid biosynthesis; L-threonine biosynthesis; L-threonine from L-aspartate: step 4/5. Functionally, catalyzes the ATP-dependent phosphorylation of L-homoserine to L-homoserine phosphate. This chain is Homoserine kinase, found in Mycobacterium tuberculosis (strain ATCC 25618 / H37Rv).